The sequence spans 834 residues: Ras GTPase-activating protein 3 (834 aa).

2 C2 domains span residues 1–112 (MAVE…DTWF) and 123–263 (VQGK…EAWY). The residue at position 2 (alanine 2) is an N-acetylalanine. Position 66 is a phosphotyrosine (tyrosine 66). Serine 77 bears the Phosphoserine mark. Threonine 110 carries the phosphothreonine modification. Residues 346-561 (GRVVPFISAI…DAVKNFLDLI (216 aa)) enclose the Ras-GAP domain. One can recognise a PH domain in the interval 576-677 (ILLKEGFMIK…WIDILTKVSQ (102 aa)). Residues 679–715 (NQKRLTVFHPSAYLNGHWLCCRASSDTAAGCTPCTGG) form a Btk-type zinc finger. Residues histidine 687, cysteine 698, cysteine 699, and cysteine 709 each contribute to the Zn(2+) site. Residues serine 809 and serine 833 each carry the phosphoserine modification.

As to expression, high levels in brain, lower in spleen and lung.

Its function is as follows. Inhibitory regulator of the Ras-cyclic AMP pathway. May bind inositol tetrakisphosphate (IP4). This is Ras GTPase-activating protein 3 (Rasa3) from Mus musculus (Mouse).